A 174-amino-acid polypeptide reads, in one-letter code: NADH-ubiquinone oxidoreductase chain 6 (174 aa).

5 helical membrane passes run 1–21 (MTYV…GFSS), 24–44 (SPIY…AIIL), 47–67 (GGGY…MVVF), 86–106 (VEVL…VLWV), and 151–171 (WLVV…IEIA).

It belongs to the complex I subunit 6 family. Core subunit of respiratory chain NADH dehydrogenase (Complex I) which is composed of 45 different subunits.

It localises to the mitochondrion inner membrane. The enzyme catalyses a ubiquinone + NADH + 5 H(+)(in) = a ubiquinol + NAD(+) + 4 H(+)(out). In terms of biological role, core subunit of the mitochondrial membrane respiratory chain NADH dehydrogenase (Complex I) which catalyzes electron transfer from NADH through the respiratory chain, using ubiquinone as an electron acceptor. Essential for the catalytic activity and assembly of complex I. This Gorilla gorilla gorilla (Western lowland gorilla) protein is NADH-ubiquinone oxidoreductase chain 6 (MT-ND6).